A 533-amino-acid chain; its full sequence is Probable intron-encoded endonuclease 3 (533 aa).

The next 3 helical transmembrane spans lie at 1–21 (MYLS…FFGR), 30–50 (LITC…FFEV), and 81–101 (LTVA…IYSI). The tract at residues 1 to 108 (MYLSIIILPL…YSISYMSHDP (108 aa)) is ndh-5 exon 1 encoded. The segment at 109–533 (RGRVRGKRVY…SISLLLGRRR (425 aa)) is ndh-5 intron 1 encoded.

In the N-terminal section; belongs to the complex I subunit 5 family. This sequence in the C-terminal section; belongs to the LAGLIDADG endonuclease family.

It localises to the mitochondrion membrane. Mitochondrial DNA endonuclease involved in intron homing. This chain is Probable intron-encoded endonuclease 3, found in Neurospora crassa (strain ATCC 24698 / 74-OR23-1A / CBS 708.71 / DSM 1257 / FGSC 987).